The primary structure comprises 164 residues: Transforming protein STP (164 aa).

The disordered stretch occupies residues 1-41; it reads MARGLGEGDPQENDESNGDPPHNTDERSDGDDGPTPYLPVT. Residues 122-135 fold into a zinc finger; it reads HSEHEQEGDKCTDC. A helical membrane pass occupies residues 136-161; that stretch reads SVTILLLLVIIVLLLIIIGLMLVIMF.

The protein resides in the membrane. In terms of biological role, stp is required for transformation, but it is not required for replication of the virus. The T-lymphocyte is the target cell for transformation by herpesvirus saimiri. The chain is Transforming protein STP (1) from Saimiriine herpesvirus 2 (strain 11) (SaHV-2).